We begin with the raw amino-acid sequence, 332 residues long: Solute carrier family 25 member 16 (332 aa).

3 Solcar repeats span residues 34-120 (FYWL…YKTF), 128-216 (SGHV…LKSV), and 238-328 (LKTH…MKQF). The next 6 helical transmembrane spans lie at 37–57 (LRSFLAGGIAGCCAKTTVAPL), 88–108 (GYLGLYKGNGAMMIRIFPYGA), 134–154 (LMAGSMAGMTAVICTYPLDVV), 191–211 (GLMPTILGMAPYAGVSFFTFG), 244–264 (LLCGGVAGAIAQTISYPFDVT), and 299–319 (GLYRGLSLNYIRCIPSQAVAF).

The protein belongs to the mitochondrial carrier (TC 2.A.29) family.

Its subcellular location is the mitochondrion inner membrane. May be involved in the transport of coenzyme A in the mitochondrial matrix. Very little is known about the physiological function of this carrier. The polypeptide is Solute carrier family 25 member 16 (Mus musculus (Mouse)).